The sequence spans 423 residues: D-tagatose-1,6-bisphosphate aldolase subunit GatZ (423 aa).

This sequence belongs to the GatZ/KbaZ family. GatZ subfamily. In terms of assembly, forms a complex with GatY.

It functions in the pathway carbohydrate metabolism; D-tagatose 6-phosphate degradation; D-glyceraldehyde 3-phosphate and glycerone phosphate from D-tagatose 6-phosphate: step 2/2. In terms of biological role, component of the tagatose-1,6-bisphosphate aldolase GatYZ that is required for full activity and stability of the Y subunit. Could have a chaperone-like function for the proper and stable folding of GatY. When expressed alone, GatZ does not show any aldolase activity. Is involved in the catabolism of galactitol. This Salmonella choleraesuis (strain SC-B67) protein is D-tagatose-1,6-bisphosphate aldolase subunit GatZ.